The sequence spans 77 residues: Acyl carrier protein (77 aa).

A Carrier domain is found at 1 to 76 (MATFDDVKAV…DVVNYIDNLK (76 aa)). An O-(pantetheine 4'-phosphoryl)serine modification is found at serine 36.

Belongs to the acyl carrier protein (ACP) family. Post-translationally, 4'-phosphopantetheine is transferred from CoA to a specific serine of apo-ACP by AcpS. This modification is essential for activity because fatty acids are bound in thioester linkage to the sulfhydryl of the prosthetic group.

It localises to the cytoplasm. The protein operates within lipid metabolism; fatty acid biosynthesis. Carrier of the growing fatty acid chain in fatty acid biosynthesis. The protein is Acyl carrier protein of Campylobacter jejuni (strain RM1221).